A 65-amino-acid polypeptide reads, in one-letter code: Hainantoxin-X-3 (65 aa).

The N-terminal stretch at 1–20 is a signal peptide; sequence MNMKILVLVAVLCLVVSTHA. Residues 21–37 constitute a propeptide that is removed on maturation; the sequence is ERHSKTDMEDSPMIQER. Intrachain disulfides connect C46/C59 and C55/C64.

Belongs to the neurotoxin 36 family. 02 subfamily. As to expression, expressed by the venom gland.

It localises to the secreted. Reversibly blocks N-type calcium channels (Cav2.2/CACNA1B) in rat dorsal root ganglion cells. Elicits no toxic symptoms in either vertebrates or invertebrates during a period of 48 hours post-injection, when it was assayed in vivo by direct injection into mice and cockroaches. The polypeptide is Hainantoxin-X-3 (Cyriopagopus hainanus (Chinese bird spider)).